The chain runs to 420 residues: MIOREX complex component 9 (420 aa).

The next 2 helical transmembrane spans lie at 125 to 145 and 149 to 169; these read VYKV…TFIL and IVVI…FFFF.

As to quaternary structure, associates with the mitochondrial ribosome.

Its subcellular location is the mitochondrion. It is found in the mitochondrion membrane. In terms of biological role, component of MIOREX complexes, large expressome-like assemblies of ribosomes with factors involved in all the steps of post-transcriptional gene expression. The protein is MIOREX complex component 9 of Saccharomyces cerevisiae (strain ATCC 204508 / S288c) (Baker's yeast).